The sequence spans 290 residues: Putative phosphatase MPN_427 (290 aa).

The active-site Nucleophile is the D16. D16 is a Mg(2+) binding site. A phosphate-binding site is contributed by L17. D18 is a binding site for Mg(2+). Residues 53–54 and K216 each bind phosphate; that span reads TG. 2 residues coordinate Mg(2+): D239 and S240. N242 contacts phosphate.

This sequence belongs to the HAD-like hydrolase superfamily. Cof family. Requires Mg(2+) as cofactor.

The chain is Putative phosphatase MPN_427 from Mycoplasma pneumoniae (strain ATCC 29342 / M129 / Subtype 1) (Mycoplasmoides pneumoniae).